The sequence spans 360 residues: Peptide chain release factor 1 (360 aa).

Residue Gln235 is modified to N5-methylglutamine.

Belongs to the prokaryotic/mitochondrial release factor family. Post-translationally, methylated by PrmC. Methylation increases the termination efficiency of RF1.

It localises to the cytoplasm. In terms of biological role, peptide chain release factor 1 directs the termination of translation in response to the peptide chain termination codons UAG and UAA. The sequence is that of Peptide chain release factor 1 from Paracidovorax citrulli (strain AAC00-1) (Acidovorax citrulli).